An 89-amino-acid chain; its full sequence is Signal recognition particle 19 kDa protein (89 aa).

Belongs to the SRP19 family. In terms of assembly, part of the signal recognition particle protein translocation system, which is composed of SRP and FtsY. Archaeal SRP consists of a 7S RNA molecule of 300 nucleotides and two protein subunits: SRP54 and SRP19.

The protein resides in the cytoplasm. In terms of biological role, involved in targeting and insertion of nascent membrane proteins into the cytoplasmic membrane. Binds directly to 7S RNA and mediates binding of the 54 kDa subunit of the SRP. The chain is Signal recognition particle 19 kDa protein from Methanococcus maripaludis (strain C7 / ATCC BAA-1331).